Reading from the N-terminus, the 92-residue chain is Elongation factor 1-beta (92 aa).

The protein belongs to the EF-1-beta/EF-1-delta family.

Its function is as follows. Promotes the exchange of GDP for GTP in EF-1-alpha/GDP, thus allowing the regeneration of EF-1-alpha/GTP that could then be used to form the ternary complex EF-1-alpha/GTP/AAtRNA. The protein is Elongation factor 1-beta of Pyrobaculum neutrophilum (strain DSM 2338 / JCM 9278 / NBRC 100436 / V24Sta) (Thermoproteus neutrophilus).